Here is a 170-residue protein sequence, read N- to C-terminus: Plastocyanin, chloroplastic (170 aa).

A chloroplast-targeting transit peptide spans 1–71 (MATVTSAAVA…SAMLASNAMA (71 aa)). A Plastocyanin-like domain is found at 72–170 (LEVLLGGDDG…AGMVGKVTVN (99 aa)). 4 residues coordinate Cu cation: histidine 108, cysteine 155, histidine 158, and methionine 163.

The protein belongs to the plastocyanin family. The cofactor is Cu(2+).

The protein resides in the plastid. It localises to the chloroplast thylakoid membrane. Participates in electron transfer between P700 and the cytochrome b6-f complex in photosystem I. The protein is Plastocyanin, chloroplastic (PETE) of Solanum lycopersicum (Tomato).